A 341-amino-acid chain; its full sequence is Cyclic GMP-AMP synthase (341 aa).

An ATP-binding site is contributed by Ser-56. Residues Asp-71 and Asp-73 contribute to the active site. Position 73 (Asp-73) interacts with Mg(2+). Position 109 (Asn-109) interacts with ATP. Asp-123 is an active-site residue. Asp-123 provides a ligand contact to Mg(2+). 2 residues coordinate ATP: Leu-192 and Asp-238.

Belongs to the CD-NTase family. B04 subfamily. As to quaternary structure, monomer. Requires Mg(2+) as cofactor.

It catalyses the reaction GTP + ATP = 3',3'-cGAMP + 2 diphosphate. Functionally, cyclic nucleotide synthase (second messenger synthase) of a CBASS antivirus system. CBASS (cyclic oligonucleotide-based antiphage signaling system) provides immunity against bacteriophage. The CD-NTase protein synthesizes cyclic nucleotides in response to infection; these serve as specific second messenger signals. The signals activate a diverse range of effectors, leading to bacterial cell death and thus abortive phage infection. A type II-A(GA) CBASS system. Catalyzes the synthesis of 3'3'-cyclic GMP-AMP (3'3'-cGAMP) from GTP and ATP, a second messenger in cell signal transduction. May make another product. Controls the activity of the CBASS cGAMP-activated phospholipase effector protein. This chain is Cyclic GMP-AMP synthase, found in Bacteroides fragilis.